The sequence spans 447 residues: uncharacterized protein (447 aa).

It is found in the mitochondrion. This is an uncharacterized protein from Dictyostelium discoideum (Social amoeba).